A 680-amino-acid polypeptide reads, in one-letter code: HEAT repeat-containing protein 3 (680 aa).

Residues 1 to 11 (MGKSRTKRFKR) are compositionally biased toward basic residues. The segment at 1 to 39 (MGKSRTKRFKRPQFSPTGDCQAEAAAAANGTGGEEDDGP) is disordered. Phosphoserine is present on Ser-15. The segment covering 18–29 (GDCQAEAAAAAN) has biased composition (low complexity). HEAT repeat units lie at residues 38–69 (GPAA…VQQR) and 74–110 (GLAR…SACG). Ser-144 is subject to Phosphoserine. Thr-340 is subject to Phosphothreonine.

It belongs to the nuclear import and ribosome assembly adapter family. Component of a hexameric 5S RNP precursor complex, composed of 5S RNA, RRS1, RPF2/BXDC1, RPL5, RPL11 and HEATR3; this complex acts as a precursor for ribosome assembly.

Its function is as follows. Plays a role in ribosome biogenesis and in nuclear import of the 60S ribosomal protein L5/large ribosomal subunit protein uL18 (RPL5). Required for proper erythrocyte maturation. This is HEAT repeat-containing protein 3 (HEATR3) from Homo sapiens (Human).